The sequence spans 254 residues: MTENRTLVLIPARMAATRLPGKPLLDIGGLPMIVHVLRRAEAAGIGRVAVATDTSDIATAVTAHGGEAIMTRADHPSGSDRVFEALGKLDPEGRIDTVVNLQGDFPTIRPGTIREVLQPLADNAVDIATLAAEIHTEEEAANPNVVKAVGSPIGPRRLRALYFTRATAPHGEGPRYHHVGLYAYRREALQRFIELPPSPLEQQERLEQLRALEGGMRIDIMIVDDVPRGVDTATDLETARQIIACSASGEHPAR.

It belongs to the KdsB family.

Its subcellular location is the cytoplasm. It carries out the reaction 3-deoxy-alpha-D-manno-oct-2-ulosonate + CTP = CMP-3-deoxy-beta-D-manno-octulosonate + diphosphate. It functions in the pathway nucleotide-sugar biosynthesis; CMP-3-deoxy-D-manno-octulosonate biosynthesis; CMP-3-deoxy-D-manno-octulosonate from 3-deoxy-D-manno-octulosonate and CTP: step 1/1. The protein operates within bacterial outer membrane biogenesis; lipopolysaccharide biosynthesis. In terms of biological role, activates KDO (a required 8-carbon sugar) for incorporation into bacterial lipopolysaccharide in Gram-negative bacteria. The sequence is that of 3-deoxy-manno-octulosonate cytidylyltransferase from Nitrobacter winogradskyi (strain ATCC 25391 / DSM 10237 / CIP 104748 / NCIMB 11846 / Nb-255).